We begin with the raw amino-acid sequence, 125 residues long: Prepro-urotensin II-alpha (125 aa).

Residues 1 to 21 (MMCNLLLSFSVLLLSCTHLVA) form the signal peptide. The propeptide occupies 109-111 (QFR). The cysteines at positions 119 and 124 are disulfide-linked.

Belongs to the urotensin-2 family.

It is found in the secreted. Its function is as follows. Urotensin is found in the teleost caudal neurosecretory system. It has a suggested role in osmoregulation and as a corticotropin-releasing factor. The non-hormonal portion of this precursor may be a urotensin binding protein, urophysin. The sequence is that of Prepro-urotensin II-alpha from Cyprinus carpio (Common carp).